The primary structure comprises 164 residues: GTP-dependent dephospho-CoA kinase (164 aa).

GTP-binding residues include Asp40, Val41, Val42, Asp59, Lys61, and Glu113.

Belongs to the GTP-dependent DPCK family.

It catalyses the reaction 3'-dephospho-CoA + GTP = GDP + CoA + H(+). Its pathway is cofactor biosynthesis; coenzyme A biosynthesis. Catalyzes the GTP-dependent phosphorylation of the 3'-hydroxyl group of dephosphocoenzyme A to form coenzyme A (CoA). This is GTP-dependent dephospho-CoA kinase from Sulfolobus acidocaldarius (strain ATCC 33909 / DSM 639 / JCM 8929 / NBRC 15157 / NCIMB 11770).